We begin with the raw amino-acid sequence, 489 residues long: Squalene monooxygenase (489 aa).

Residues 10 to 30 (VTYDALIVGAGVIGPCVATAL) form a helical membrane-spanning segment. Residues 21 to 22 (VI), 41 to 42 (ER), R49, R151, V167, D328, and M341 contribute to the FAD site. A run of 2 helical transmembrane segments spans residues 426-446 (FLAGVLPKPLLLTRVFFAVAF) and 464-484 (ALLEGIMILITAIKVFTPFLV).

Belongs to the squalene monooxygenase family. FAD serves as cofactor.

It localises to the microsome membrane. Its subcellular location is the endoplasmic reticulum membrane. It carries out the reaction squalene + reduced [NADPH--hemoprotein reductase] + O2 = (S)-2,3-epoxysqualene + oxidized [NADPH--hemoprotein reductase] + H2O + H(+). It functions in the pathway terpene metabolism; lanosterol biosynthesis; lanosterol from farnesyl diphosphate: step 2/3. In terms of biological role, catalyzes the stereospecific oxidation of squalene to (S)-2,3-epoxysqualene, and is considered to be a rate-limiting enzyme in steroid biosynthesis. The polypeptide is Squalene monooxygenase (ERG1) (Candida glabrata (strain ATCC 2001 / BCRC 20586 / JCM 3761 / NBRC 0622 / NRRL Y-65 / CBS 138) (Yeast)).